The chain runs to 434 residues: UDP-N-acetylmuramate--L-alanine ligase (434 aa).

Position 108 to 114 (108 to 114) interacts with ATP; the sequence is GSHGKTT.

The protein belongs to the MurCDEF family.

The protein localises to the cytoplasm. The catalysed reaction is UDP-N-acetyl-alpha-D-muramate + L-alanine + ATP = UDP-N-acetyl-alpha-D-muramoyl-L-alanine + ADP + phosphate + H(+). It participates in cell wall biogenesis; peptidoglycan biosynthesis. Its function is as follows. Cell wall formation. The sequence is that of UDP-N-acetylmuramate--L-alanine ligase from Geobacillus thermodenitrificans (strain NG80-2).